The following is a 306-amino-acid chain: N-acetylmuramic acid 6-phosphate etherase (306 aa).

Residues 62-225 enclose the SIS domain; the sequence is IAQAFQNGGR…TTASMIRIGK (164 aa). Glutamate 90 acts as the Proton donor in catalysis. Residue glutamate 121 is part of the active site.

Belongs to the GCKR-like family. MurNAc-6-P etherase subfamily. In terms of assembly, homodimer.

It carries out the reaction N-acetyl-D-muramate 6-phosphate + H2O = N-acetyl-D-glucosamine 6-phosphate + (R)-lactate. The protein operates within amino-sugar metabolism; 1,6-anhydro-N-acetylmuramate degradation. It functions in the pathway amino-sugar metabolism; N-acetylmuramate degradation. It participates in cell wall biogenesis; peptidoglycan recycling. In terms of biological role, specifically catalyzes the cleavage of the D-lactyl ether substituent of MurNAc 6-phosphate, producing GlcNAc 6-phosphate and D-lactate. Together with AnmK, is also required for the utilization of anhydro-N-acetylmuramic acid (anhMurNAc) either imported from the medium or derived from its own cell wall murein, and thus plays a role in cell wall recycling. This chain is N-acetylmuramic acid 6-phosphate etherase, found in Vibrio atlanticus (strain LGP32) (Vibrio splendidus (strain Mel32)).